Consider the following 132-residue polypeptide: Small ribosomal subunit protein uS13 (132 aa).

The disordered stretch occupies residues 106 to 132 (PVRGQVTQKNARTRKGPRKTVAGKKGK). A compositionally biased stretch (basic residues) spans 116-132 (ARTRKGPRKTVAGKKGK).

Belongs to the universal ribosomal protein uS13 family. In terms of assembly, part of the 30S ribosomal subunit. Forms a loose heterodimer with protein S19. Forms two bridges to the 50S subunit in the 70S ribosome.

In terms of biological role, located at the top of the head of the 30S subunit, it contacts several helices of the 16S rRNA. In the 70S ribosome it contacts the 23S rRNA (bridge B1a) and protein L5 of the 50S subunit (bridge B1b), connecting the 2 subunits; these bridges are implicated in subunit movement. Contacts the tRNAs in the A and P-sites. This Mycoplasmopsis pulmonis (strain UAB CTIP) (Mycoplasma pulmonis) protein is Small ribosomal subunit protein uS13.